The chain runs to 401 residues: Tryptophan synthase beta chain (401 aa).

Lys-91 carries the N6-(pyridoxal phosphate)lysine modification.

The protein belongs to the TrpB family. In terms of assembly, tetramer of two alpha and two beta chains. Requires pyridoxal 5'-phosphate as cofactor.

The catalysed reaction is (1S,2R)-1-C-(indol-3-yl)glycerol 3-phosphate + L-serine = D-glyceraldehyde 3-phosphate + L-tryptophan + H2O. It participates in amino-acid biosynthesis; L-tryptophan biosynthesis; L-tryptophan from chorismate: step 5/5. In terms of biological role, the beta subunit is responsible for the synthesis of L-tryptophan from indole and L-serine. This Lactococcus lactis subsp. cremoris (strain MG1363) protein is Tryptophan synthase beta chain.